Consider the following 509-residue polypeptide: Maturase K (509 aa).

The protein belongs to the intron maturase 2 family. MatK subfamily.

The protein localises to the plastid. It is found in the chloroplast. Its function is as follows. Usually encoded in the trnK tRNA gene intron. Probably assists in splicing its own and other chloroplast group II introns. The polypeptide is Maturase K (Clematis lasiantha (Pipestem clematis)).